A 75-amino-acid chain; its full sequence is Small ribosomal subunit protein bS18 (75 aa).

It belongs to the bacterial ribosomal protein bS18 family. As to quaternary structure, part of the 30S ribosomal subunit. Forms a tight heterodimer with protein bS6.

In terms of biological role, binds as a heterodimer with protein bS6 to the central domain of the 16S rRNA, where it helps stabilize the platform of the 30S subunit. The sequence is that of Small ribosomal subunit protein bS18 from Legionella pneumophila (strain Paris).